A 95-amino-acid polypeptide reads, in one-letter code: Small ribosomal subunit protein uS14 (95 aa).

The protein belongs to the universal ribosomal protein uS14 family. Part of the 30S ribosomal subunit. Contacts proteins S3 and S10.

Binds 16S rRNA, required for the assembly of 30S particles and may also be responsible for determining the conformation of the 16S rRNA at the A site. This Carsonella ruddii protein is Small ribosomal subunit protein uS14 (rpsN).